A 67-amino-acid chain; its full sequence is uncharacterized protein (67 aa).

This sequence belongs to the flocculin family.

This is an uncharacterized protein from Saccharomyces cerevisiae (strain ATCC 204508 / S288c) (Baker's yeast).